Reading from the N-terminus, the 164-residue chain is Pyruvoyl-dependent arginine decarboxylase (164 aa).

Ser52 carries the post-translational modification Pyruvic acid (Ser).

Belongs to the PdaD family. The cofactor is pyruvate.

The enzyme catalyses L-arginine + H(+) = agmatine + CO2. This is Pyruvoyl-dependent arginine decarboxylase from Methanococcus maripaludis (strain C6 / ATCC BAA-1332).